The sequence spans 32 residues: Calcitonin (32 aa).

Cysteine 1 and cysteine 7 are disulfide-bonded. Residue proline 32 is modified to Proline amide.

This sequence belongs to the calcitonin family.

The protein localises to the secreted. Its function is as follows. Calcitonin is a peptide hormone that causes a rapid but short-lived drop in the level of calcium and phosphate in blood by promoting the incorporation of those ions in the bones. Calcitonin function is mediated by the calcitonin receptor/CALCR and the CALCR-RAMP2 (AMYR2) receptor complex. This Bos taurus (Bovine) protein is Calcitonin (CALCA).